We begin with the raw amino-acid sequence, 171 residues long: Disulfide bond formation protein B (171 aa).

Residues 1–13 are Cytoplasmic-facing; it reads MTFISNLADTRLA. Residues 14 to 30 form a helical membrane-spanning segment; the sequence is WGLLFLSALVLVAYALF. Topologically, residues 31-48 are periplasmic; the sequence is SQHAMGLQPCIMCIYQRT. A disulfide bridge connects residues Cys40 and Cys43. Residues 49–63 traverse the membrane as a helical segment; sequence AIFGIMFACVPVLAA. Topologically, residues 64 to 70 are cytoplasmic; the sequence is NNMLTRL. A helical membrane pass occupies residues 71–88; sequence FAFTVWGISAIWGGLIAW. Topologically, residues 89–144 are periplasmic; it reads EHYDIQNAANPFFATCEIVPNFPSWLPLHEWLPNLFAATGDCGNIDWVFMDMSMPQ. A disulfide bridge connects residues Cys104 and Cys130. The helical transmembrane segment at 145–163 threads the bilayer; sequence WMMVVFAIYSSIWFVVLAS. Topologically, residues 164-171 are cytoplasmic; the sequence is RLIGNRAI.

This sequence belongs to the DsbB family.

Its subcellular location is the cell inner membrane. Required for disulfide bond formation in some periplasmic proteins. Acts by oxidizing the DsbA protein. The protein is Disulfide bond formation protein B of Pseudoalteromonas atlantica (strain T6c / ATCC BAA-1087).